The primary structure comprises 665 residues: Methionine--tRNA ligase (665 aa).

The 'HIGH' region signature appears at 12–22 (YYPSGKLHIGS). Positions 308 to 312 (KMSKS) match the 'KMSKS' region motif. An ATP-binding site is contributed by Lys-311. The tRNA-binding domain occupies 562–665 (TFDAVEIRVA…SSVPNGSIIG (104 aa)).

The protein belongs to the class-I aminoacyl-tRNA synthetase family. MetG type 2B subfamily. Homodimer.

The protein resides in the cytoplasm. The enzyme catalyses tRNA(Met) + L-methionine + ATP = L-methionyl-tRNA(Met) + AMP + diphosphate. Functionally, is required not only for elongation of protein synthesis but also for the initiation of all mRNA translation through initiator tRNA(fMet) aminoacylation. This chain is Methionine--tRNA ligase (metG), found in Streptococcus pyogenes serotype M1.